The primary structure comprises 465 residues: ATP synthase subunit beta (465 aa).

149–156 (GGAGVGKT) lines the ATP pocket.

It belongs to the ATPase alpha/beta chains family. In terms of assembly, F-type ATPases have 2 components, CF(1) - the catalytic core - and CF(0) - the membrane proton channel. CF(1) has five subunits: alpha(3), beta(3), gamma(1), delta(1), epsilon(1). CF(0) has three main subunits: a(1), b(2) and c(9-12). The alpha and beta chains form an alternating ring which encloses part of the gamma chain. CF(1) is attached to CF(0) by a central stalk formed by the gamma and epsilon chains, while a peripheral stalk is formed by the delta and b chains.

The protein localises to the cell inner membrane. It carries out the reaction ATP + H2O + 4 H(+)(in) = ADP + phosphate + 5 H(+)(out). Functionally, produces ATP from ADP in the presence of a proton gradient across the membrane. The catalytic sites are hosted primarily by the beta subunits. The polypeptide is ATP synthase subunit beta (Dictyoglomus turgidum (strain DSM 6724 / Z-1310)).